The chain runs to 372 residues: Queuine tRNA-ribosyltransferase (372 aa).

Aspartate 92 serves as the catalytic Proton acceptor. Substrate-binding positions include 92 to 96 (DSGGF), aspartate 146, glutamine 188, and glycine 215. Residues 246–252 (GIGTLRE) are RNA binding. Aspartate 265 serves as the catalytic Nucleophile. The interval 270-274 (TRLGR) is RNA binding; important for wobble base 34 recognition. Residues cysteine 303, cysteine 305, cysteine 308, and histidine 334 each contribute to the Zn(2+) site.

It belongs to the queuine tRNA-ribosyltransferase family. In terms of assembly, homodimer. Within each dimer, one monomer is responsible for RNA recognition and catalysis, while the other monomer binds to the replacement base PreQ1. Requires Zn(2+) as cofactor.

It carries out the reaction 7-aminomethyl-7-carbaguanine + guanosine(34) in tRNA = 7-aminomethyl-7-carbaguanosine(34) in tRNA + guanine. It functions in the pathway tRNA modification; tRNA-queuosine biosynthesis. Functionally, catalyzes the base-exchange of a guanine (G) residue with the queuine precursor 7-aminomethyl-7-deazaguanine (PreQ1) at position 34 (anticodon wobble position) in tRNAs with GU(N) anticodons (tRNA-Asp, -Asn, -His and -Tyr). Catalysis occurs through a double-displacement mechanism. The nucleophile active site attacks the C1' of nucleotide 34 to detach the guanine base from the RNA, forming a covalent enzyme-RNA intermediate. The proton acceptor active site deprotonates the incoming PreQ1, allowing a nucleophilic attack on the C1' of the ribose to form the product. After dissociation, two additional enzymatic reactions on the tRNA convert PreQ1 to queuine (Q), resulting in the hypermodified nucleoside queuosine (7-(((4,5-cis-dihydroxy-2-cyclopenten-1-yl)amino)methyl)-7-deazaguanosine). The chain is Queuine tRNA-ribosyltransferase from Synechococcus sp. (strain CC9311).